A 472-amino-acid chain; its full sequence is Glutamate synthase [NADPH] small chain (472 aa).

In terms of domain architecture, 4Fe-4S ferredoxin-type spans 41 to 72 (QDAAAQAHRCLHCGNPYCEWKCPVHNYIPNWL). [4Fe-4S] cluster contacts are provided by C50, C53, C58, and C62.

[4Fe-4S] cluster serves as cofactor.

The enzyme catalyses 2 L-glutamate + NADP(+) = L-glutamine + 2-oxoglutarate + NADPH + H(+). Its pathway is amino-acid biosynthesis; L-glutamate biosynthesis via GLT pathway; L-glutamate from 2-oxoglutarate and L-glutamine (NADP(+) route): step 1/1. It functions in the pathway energy metabolism; nitrogen metabolism. Its function is as follows. Catalyzes the conversion of L-glutamine and 2-oxoglutarate into two molecules of L-glutamate. This chain is Glutamate synthase [NADPH] small chain, found in Halomonas elongata (strain ATCC 33173 / DSM 2581 / NBRC 15536 / NCIMB 2198 / 1H9).